The following is a 256-amino-acid chain: MKRAYAMPLTNPSFPPGPYRFFDREYIIITYRTTREALEAVVPAPLEIDEPLVKYEFIRMPDSTGFGDYTETGQVIPVKYKGQHGGYVHSMYLDDDAPIAGGRELWGFPKKLANPKIVHEGEVIVGTLHYGSVLCATGTMGYKHREADHDSVLASLAAPNFLIKIIPHVDGGPRICELVRYYLTDITLKEAWTAPAALDLRPHVMADVAKLPVLDIISAVHFKADLTLGLGEVVHDYLSDHNRLATSTTQPEKIRA.

Lysine 110 functions as the Schiff-base intermediate with acetoacetate in the catalytic mechanism.

Belongs to the ADC family.

It carries out the reaction acetoacetate + H(+) = acetone + CO2. In terms of biological role, catalyzes the conversion of acetoacetate to acetone and carbon dioxide. The polypeptide is Acetoacetate decarboxylase 3 (Mesorhizobium japonicum (strain LMG 29417 / CECT 9101 / MAFF 303099) (Mesorhizobium loti (strain MAFF 303099))).